A 379-amino-acid chain; its full sequence is MSTPAILALADGTIFKGTSIGATGSTTGEVVFNTAMTGYQEILTDPSYAQQLVTLTYPHIGNTGCNEEDTESGRIHKVWANGLIIRDLPLLHSNFRSEQSLAEYLIQHNVVAIADIDTRKLTRILRDKGAQNGCILAGENITEEEALAKARAFGGLNGLDLAKECCDPNGFEWTEGSWELGKGFTQPELKYHVVAYDYGVKTNILRMLADRGCKLTVVPAQTPAEQVLALNPDGVFLSNGPGDPAACDYAIEAVKTIVETTNLPVFGICLGHQILALASGAKTMKMNHGHHGANHPVQNLEQGTVMITSQNHGFAVDESTLPANLKVTHRSLFDGTNQGIHRTDKPAFSFQGHPEASPGPHDCAPLFDHFIELIEAAKK.

The segment at 1-188 (MSTPAILALA…ELGKGFTQPE (188 aa)) is CPSase. Residues Ser-47, Gly-240, and Gly-242 each coordinate L-glutamine. Residues 192–379 (HVVAYDYGVK…FIELIEAAKK (188 aa)) form the Glutamine amidotransferase type-1 domain. The active-site Nucleophile is the Cys-269. Positions 270, 273, 311, 313, and 314 each coordinate L-glutamine. Residues His-353 and Glu-355 contribute to the active site.

This sequence belongs to the CarA family. As to quaternary structure, composed of two chains; the small (or glutamine) chain promotes the hydrolysis of glutamine to ammonia, which is used by the large (or ammonia) chain to synthesize carbamoyl phosphate. Tetramer of heterodimers (alpha,beta)4.

It carries out the reaction hydrogencarbonate + L-glutamine + 2 ATP + H2O = carbamoyl phosphate + L-glutamate + 2 ADP + phosphate + 2 H(+). The enzyme catalyses L-glutamine + H2O = L-glutamate + NH4(+). The protein operates within amino-acid biosynthesis; L-arginine biosynthesis; carbamoyl phosphate from bicarbonate: step 1/1. Its pathway is pyrimidine metabolism; UMP biosynthesis via de novo pathway; (S)-dihydroorotate from bicarbonate: step 1/3. Its function is as follows. Small subunit of the glutamine-dependent carbamoyl phosphate synthetase (CPSase). CPSase catalyzes the formation of carbamoyl phosphate from the ammonia moiety of glutamine, carbonate, and phosphate donated by ATP, constituting the first step of 2 biosynthetic pathways, one leading to arginine and/or urea and the other to pyrimidine nucleotides. The small subunit (glutamine amidotransferase) binds and cleaves glutamine to supply the large subunit with the substrate ammonia. The polypeptide is Carbamoyl phosphate synthase small chain (Acinetobacter baylyi (strain ATCC 33305 / BD413 / ADP1)).